The chain runs to 106 residues: UPF0145 protein Daci_3728 (106 aa).

The protein belongs to the UPF0145 family.

The chain is UPF0145 protein Daci_3728 from Delftia acidovorans (strain DSM 14801 / SPH-1).